The primary structure comprises 376 residues: Cellular tumor antigen p53 (376 aa).

Residues Met1–Trp36 are transcription activation (acidic). Residues Asp77–Gln268 mediate DNA binding. A compositionally biased stretch (basic and acidic residues) spans Arg150–Asp159. The interval Arg150 to Leu171 is disordered. Positions 151, 154, 214, and 218 each coordinate Zn(2+). Residues Arg249 to Arg256 form an interaction with DNA region. 2 stretches are compositionally biased toward basic and acidic residues: residues Asp257–Glu270 and Ser282–Lys294. Positions Asp257–Tyr306 are disordered. A Bipartite nuclear localization signal motif is present at residues Lys280–Lys297. The tract at residues Asp303–Pro334 is oligomerization. The short motif at Glu317–Leu328 is the Nuclear export signal element. Residues Gln342–Asp376 form a disordered region. The segment at Lys347 to Lys372 is basic (repression of DNA-binding). A compositionally biased stretch (basic and acidic residues) spans Cys349–Lys361.

This sequence belongs to the p53 family. In terms of assembly, binds DNA as a homotetramer. It depends on Zn(2+) as a cofactor.

The protein resides in the cytoplasm. It localises to the nucleus. Multifunctional transcription factor that induces cell cycle arrest, DNA repair or apoptosis upon binding to its target DNA sequence. Acts as a tumor suppressor in many tumor types; induces growth arrest or apoptosis depending on the physiological circumstances and cell type. Negatively regulates cell division by controlling expression of a set of genes required for this process. One of the activated genes is an inhibitor of cyclin-dependent kinases. Apoptosis induction seems to be mediated either by stimulation of BAX and FAS antigen expression, or by repression of Bcl-2 expression. The polypeptide is Cellular tumor antigen p53 (tp53) (Ictalurus punctatus (Channel catfish)).